Consider the following 492-residue polypeptide: Glutamyl-tRNA(Gln) amidotransferase subunit A (492 aa).

Catalysis depends on charge relay system residues lysine 84 and serine 159. Serine 183 (acyl-ester intermediate) is an active-site residue.

Belongs to the amidase family. GatA subfamily. Heterotrimer of A, B and C subunits.

The catalysed reaction is L-glutamyl-tRNA(Gln) + L-glutamine + ATP + H2O = L-glutaminyl-tRNA(Gln) + L-glutamate + ADP + phosphate + H(+). Its function is as follows. Allows the formation of correctly charged Gln-tRNA(Gln) through the transamidation of misacylated Glu-tRNA(Gln) in organisms which lack glutaminyl-tRNA synthetase. The reaction takes place in the presence of glutamine and ATP through an activated gamma-phospho-Glu-tRNA(Gln). In Anaeromyxobacter dehalogenans (strain 2CP-C), this protein is Glutamyl-tRNA(Gln) amidotransferase subunit A.